The chain runs to 373 residues: Mitochondrial nicotinamide adenine dinucleotide transporter 1 (373 aa).

Topologically, residues 1 to 80 are mitochondrial matrix; it reads MTQTDNPVPN…WVPLSSTQIT (80 aa). Solcar repeat units lie at residues 75-166, 174-263, and 276-364; these read SSTQ…SKKF, FDFV…LKVR, and INLQ…FRNR. Residues 81–101 traverse the membrane as a helical segment; it reads ALSGAFAGFLSGVAVCPLDVA. Residues 102–141 are Mitochondrial intermembrane-facing; sequence KTRLQAQGLQTRFENPYYRGIMGTLSTIVRDEGPRGLYKG. The helical transmembrane segment at 142 to 162 threads the bilayer; the sequence is LVPIVLGYFPTWMIYFSVYEF. Residues 163 to 176 lie on the Mitochondrial matrix side of the membrane; sequence SKKFFHGIFPQFDF. The chain crosses the membrane as a helical span at residues 177–199; it reads VAQSCAAITAGAASTTLTNPIWV. Residues 200–235 are Mitochondrial intermembrane-facing; that stretch reads VKTRLMLQSNLGEHPTHYKGTFDAFRKLFYQEGFKA. A helical membrane pass occupies residues 236-256; the sequence is LYAGLVPSLLGLFHVAIHFPI. Over 257 to 280 the chain is Mitochondrial matrix; it reads YEDLKVRFHCYSRENNTNSINLQR. A helical membrane pass occupies residues 281-297; that stretch reads LIMASSVSKMIASAVTY. Topologically, residues 298-335 are mitochondrial intermembrane; it reads PHEILRTRMQLKSDIPDSIQRRLFPLIKATYAQEGLKG. The helical transmembrane segment at 336–358 threads the bilayer; sequence FYSGFTTNLVRTIPASAITLVSF. Residues 359 to 373 are Mitochondrial matrix-facing; that stretch reads EYFRNRLENISTMVI.

It belongs to the mitochondrial carrier (TC 2.A.29) family.

The protein localises to the mitochondrion inner membrane. It carries out the reaction dAMP(in) + NAD(+)(out) = dAMP(out) + NAD(+)(in). The catalysed reaction is dGMP(in) + NAD(+)(out) = dGMP(out) + NAD(+)(in). It catalyses the reaction GMP(in) + NAD(+)(out) = GMP(out) + NAD(+)(in). The enzyme catalyses AMP(in) + NAD(+)(out) = AMP(out) + NAD(+)(in). It carries out the reaction deamido-NAD(+)(in) + NAD(+)(out) = deamido-NAD(+)(out) + NAD(+)(in). Its function is as follows. Mitochondrial inner membrane carrier protein that mediates the import of NAD(+) into mitochondria. Can transport NAD(+) by unidirectional transport or by exchange with intramitochondrially generated dAMP and dGMP. Also able to transport NAD(+) by exchange with AMP, GMP or deamido-NAD (+) in vitro. The chain is Mitochondrial nicotinamide adenine dinucleotide transporter 1 (YIA6) from Saccharomyces cerevisiae (strain ATCC 204508 / S288c) (Baker's yeast).